A 331-amino-acid chain; its full sequence is DNA-directed RNA polymerase subunit alpha (331 aa).

Positions 1–226 (MLIAQRPTLT…ELFGLARELN (226 aa)) are alpha N-terminal domain (alpha-NTD). Positions 243 to 331 (LSSELSMPIE…SYDEDETTTN (89 aa)) are alpha C-terminal domain (alpha-CTD).

This sequence belongs to the RNA polymerase alpha chain family. Homodimer. The RNAP catalytic core consists of 2 alpha, 1 beta, 1 beta' and 1 omega subunit. When a sigma factor is associated with the core the holoenzyme is formed, which can initiate transcription.

The enzyme catalyses RNA(n) + a ribonucleoside 5'-triphosphate = RNA(n+1) + diphosphate. DNA-dependent RNA polymerase catalyzes the transcription of DNA into RNA using the four ribonucleoside triphosphates as substrates. The protein is DNA-directed RNA polymerase subunit alpha of Clavibacter michiganensis subsp. michiganensis (strain NCPPB 382).